The chain runs to 393 residues: Chorismate synthase (393 aa).

Arg40 and Arg46 together coordinate NADP(+). FMN contacts are provided by residues 129-131, 251-252, Gly301, 316-320, and Arg342; these read RAS, QA, and KPIST.

It belongs to the chorismate synthase family. Homotetramer. Requires FMNH2 as cofactor.

It carries out the reaction 5-O-(1-carboxyvinyl)-3-phosphoshikimate = chorismate + phosphate. Its pathway is metabolic intermediate biosynthesis; chorismate biosynthesis; chorismate from D-erythrose 4-phosphate and phosphoenolpyruvate: step 7/7. In terms of biological role, catalyzes the anti-1,4-elimination of the C-3 phosphate and the C-6 proR hydrogen from 5-enolpyruvylshikimate-3-phosphate (EPSP) to yield chorismate, which is the branch point compound that serves as the starting substrate for the three terminal pathways of aromatic amino acid biosynthesis. This reaction introduces a second double bond into the aromatic ring system. The polypeptide is Chorismate synthase (Koribacter versatilis (strain Ellin345)).